The following is a 417-amino-acid chain: Adenosylhomocysteinase (417 aa).

Substrate-binding residues include Thr53, Asp125, and Glu149. 150 to 152 contacts NAD(+); it reads TTT. Lys179 and Asp183 together coordinate substrate. Residues Asn184, 213–218, Glu236, Asn271, 292–294, and Asn339 each bind NAD(+); these read GYGWVG and AGH.

It belongs to the adenosylhomocysteinase family. It depends on NAD(+) as a cofactor.

It is found in the cytoplasm. The catalysed reaction is S-adenosyl-L-homocysteine + H2O = L-homocysteine + adenosine. Its pathway is amino-acid biosynthesis; L-homocysteine biosynthesis; L-homocysteine from S-adenosyl-L-homocysteine: step 1/1. In terms of biological role, may play a key role in the regulation of the intracellular concentration of adenosylhomocysteine. The sequence is that of Adenosylhomocysteinase from Saccharolobus solfataricus (strain ATCC 35092 / DSM 1617 / JCM 11322 / P2) (Sulfolobus solfataricus).